The sequence spans 290 residues: S-methyl-5'-thioadenosine phosphorylase (290 aa).

Phosphate-binding positions include serine 11, 53–54 (RH), and 86–87 (SA). Methionine 184 lines the substrate pocket. Residue threonine 185 coordinates phosphate. 208-210 (DYD) serves as a coordination point for substrate.

Belongs to the PNP/MTAP phosphorylase family. MTAP subfamily. As to quaternary structure, homohexamer. Dimer of a homotrimer.

The catalysed reaction is S-methyl-5'-thioadenosine + phosphate = 5-(methylsulfanyl)-alpha-D-ribose 1-phosphate + adenine. Its pathway is amino-acid biosynthesis; L-methionine biosynthesis via salvage pathway; S-methyl-5-thio-alpha-D-ribose 1-phosphate from S-methyl-5'-thioadenosine (phosphorylase route): step 1/1. Catalyzes the reversible phosphorylation of S-methyl-5'-thioadenosine (MTA) to adenine and 5-methylthioribose-1-phosphate. Involved in the breakdown of MTA, a major by-product of polyamine biosynthesis. Responsible for the first step in the methionine salvage pathway after MTA has been generated from S-adenosylmethionine. Has broad substrate specificity with 6-aminopurine nucleosides as preferred substrates. The sequence is that of S-methyl-5'-thioadenosine phosphorylase from Cereibacter sphaeroides (strain ATCC 17023 / DSM 158 / JCM 6121 / CCUG 31486 / LMG 2827 / NBRC 12203 / NCIMB 8253 / ATH 2.4.1.) (Rhodobacter sphaeroides).